We begin with the raw amino-acid sequence, 236 residues long: uncharacterized protein (236 aa).

Belongs to the HyuE racemase family.

It is found in the cytoplasm. This is an uncharacterized protein from Schizosaccharomyces pombe (strain 972 / ATCC 24843) (Fission yeast).